A 313-amino-acid chain; its full sequence is Ribosomal RNA small subunit methyltransferase H (313 aa).

S-adenosyl-L-methionine-binding positions include 35-37, Asp55, Phe79, Asp101, and Gln108; that span reads GGH.

The protein belongs to the methyltransferase superfamily. RsmH family.

The protein resides in the cytoplasm. It catalyses the reaction cytidine(1402) in 16S rRNA + S-adenosyl-L-methionine = N(4)-methylcytidine(1402) in 16S rRNA + S-adenosyl-L-homocysteine + H(+). Its function is as follows. Specifically methylates the N4 position of cytidine in position 1402 (C1402) of 16S rRNA. The polypeptide is Ribosomal RNA small subunit methyltransferase H (Salmonella newport (strain SL254)).